Here is a 494-residue protein sequence, read N- to C-terminus: Glutamate--tRNA ligase (494 aa).

The 'HIGH' region motif lies at 10 to 20; sequence PSPTGDPHVGT. Zn(2+) is bound by residues C107, C109, C134, and H136. The 'KMSKS' region motif lies at 251-255; that stretch reads KLSKR. K254 serves as a coordination point for ATP.

The protein belongs to the class-I aminoacyl-tRNA synthetase family. Glutamate--tRNA ligase type 1 subfamily. As to quaternary structure, monomer. Zn(2+) serves as cofactor.

It localises to the cytoplasm. The enzyme catalyses tRNA(Glu) + L-glutamate + ATP = L-glutamyl-tRNA(Glu) + AMP + diphosphate. In terms of biological role, catalyzes the attachment of glutamate to tRNA(Glu) in a two-step reaction: glutamate is first activated by ATP to form Glu-AMP and then transferred to the acceptor end of tRNA(Glu). The sequence is that of Glutamate--tRNA ligase from Pseudomonas paraeruginosa (strain DSM 24068 / PA7) (Pseudomonas aeruginosa (strain PA7)).